Consider the following 144-residue polypeptide: Cytochrome c oxidase subunit 4 isoform 1, mitochondrial (144 aa).

Residues 1–73 (SVVKSEDFSL…SFAEMNRGSN (73 aa)) are Mitochondrial matrix-facing. K4 bears the N6-acetyllysine; alternate mark. The residue at position 4 (K4) is an N6-succinyllysine; alternate. The residue at position 28 (K28) is an N6-acetyllysine. Phosphoserine occurs at positions 31 and 33. K35 bears the N6-acetyllysine; alternate mark. The residue at position 35 (K35) is an N6-succinyllysine; alternate. The residue at position 42 (K42) is an N6-acetyllysine. The helical transmembrane segment at 74–99 (EWKTVVGGAMFFIGFTALIIMWQKRH) threads the bilayer. The Mitochondrial intermembrane segment spans residues 100 to 144 (VYGPLPQSFDKEWVAKQTKRMLDMKVNPIQGLASKWDYEKNEWKK).

The protein belongs to the cytochrome c oxidase IV family. As to quaternary structure, component of the cytochrome c oxidase (complex IV, CIV), a multisubunit enzyme composed of 14 subunits. The complex is composed of a catalytic core of 3 subunits MT-CO1, MT-CO2 and MT-CO3, encoded in the mitochondrial DNA, and 11 supernumerary subunits COX4I, COX5A, COX5B, COX6A, COX6B, COX6C, COX7A, COX7B, COX7C, COX8 and NDUFA4, which are encoded in the nuclear genome. The complex exists as a monomer or a dimer and forms supercomplexes (SCs) in the inner mitochondrial membrane with NADH-ubiquinone oxidoreductase (complex I, CI) and ubiquinol-cytochrome c oxidoreductase (cytochrome b-c1 complex, complex III, CIII), resulting in different assemblies (supercomplex SCI(1)III(2)IV(1) and megacomplex MCI(2)III(2)IV(2)). Interacts with PHB2; the interaction decreases in absence of SPHK2. Interacts with AFG1L. Interacts with ABCB7; this interaction allows the regulation of cellular iron homeostasis and cellular reactive oxygen species (ROS) levels in cardiomyocytes. Interacts with FLVCR2; this interaction occurs in the absence of heme and is disrupted upon heme binding. Interacts with IRGC.

It is found in the mitochondrion inner membrane. It functions in the pathway energy metabolism; oxidative phosphorylation. Its function is as follows. Component of the cytochrome c oxidase, the last enzyme in the mitochondrial electron transport chain which drives oxidative phosphorylation. The respiratory chain contains 3 multisubunit complexes succinate dehydrogenase (complex II, CII), ubiquinol-cytochrome c oxidoreductase (cytochrome b-c1 complex, complex III, CIII) and cytochrome c oxidase (complex IV, CIV), that cooperate to transfer electrons derived from NADH and succinate to molecular oxygen, creating an electrochemical gradient over the inner membrane that drives transmembrane transport and the ATP synthase. Cytochrome c oxidase is the component of the respiratory chain that catalyzes the reduction of oxygen to water. Electrons originating from reduced cytochrome c in the intermembrane space (IMS) are transferred via the dinuclear copper A center (CU(A)) of subunit 2 and heme A of subunit 1 to the active site in subunit 1, a binuclear center (BNC) formed by heme A3 and copper B (CU(B)). The BNC reduces molecular oxygen to 2 water molecules using 4 electrons from cytochrome c in the IMS and 4 protons from the mitochondrial matrix. The chain is Cytochrome c oxidase subunit 4 isoform 1, mitochondrial (COX4I1) from Pongo pygmaeus (Bornean orangutan).